Here is a 392-residue protein sequence, read N- to C-terminus: Succinate--CoA ligase [ADP-forming] subunit beta (392 aa).

Residues 9 to 244 (KALLAQYGVG…LSEEESSEIE (236 aa)) enclose the ATP-grasp domain. Residues lysine 46, 53–55 (GRG), glutamate 99, leucine 102, and glutamate 107 contribute to the ATP site. Residues asparagine 199 and aspartate 213 each contribute to the Mg(2+) site. Substrate is bound by residues asparagine 264 and 321–323 (GIV).

Belongs to the succinate/malate CoA ligase beta subunit family. Heterotetramer of two alpha and two beta subunits. Mg(2+) serves as cofactor.

The enzyme catalyses succinate + ATP + CoA = succinyl-CoA + ADP + phosphate. It carries out the reaction GTP + succinate + CoA = succinyl-CoA + GDP + phosphate. It participates in carbohydrate metabolism; tricarboxylic acid cycle; succinate from succinyl-CoA (ligase route): step 1/1. In terms of biological role, succinyl-CoA synthetase functions in the citric acid cycle (TCA), coupling the hydrolysis of succinyl-CoA to the synthesis of either ATP or GTP and thus represents the only step of substrate-level phosphorylation in the TCA. The beta subunit provides nucleotide specificity of the enzyme and binds the substrate succinate, while the binding sites for coenzyme A and phosphate are found in the alpha subunit. The sequence is that of Succinate--CoA ligase [ADP-forming] subunit beta from Wolinella succinogenes (strain ATCC 29543 / DSM 1740 / CCUG 13145 / JCM 31913 / LMG 7466 / NCTC 11488 / FDC 602W) (Vibrio succinogenes).